Reading from the N-terminus, the 273-residue chain is Formamidopyrimidine-DNA glycosylase (273 aa).

The active-site Schiff-base intermediate with DNA is P2. The active-site Proton donor is E3. K58 serves as the catalytic Proton donor; for beta-elimination activity. Residues H91 and R110 each contribute to the DNA site. The segment at 238 to 272 (QVYGKTGQPCPRCGCLIKKIKVGGRGTHYCPRCQC) adopts an FPG-type zinc-finger fold. Catalysis depends on R262, which acts as the Proton donor; for delta-elimination activity.

Belongs to the FPG family. In terms of assembly, monomer. Requires Zn(2+) as cofactor.

It carries out the reaction Hydrolysis of DNA containing ring-opened 7-methylguanine residues, releasing 2,6-diamino-4-hydroxy-5-(N-methyl)formamidopyrimidine.. The catalysed reaction is 2'-deoxyribonucleotide-(2'-deoxyribose 5'-phosphate)-2'-deoxyribonucleotide-DNA = a 3'-end 2'-deoxyribonucleotide-(2,3-dehydro-2,3-deoxyribose 5'-phosphate)-DNA + a 5'-end 5'-phospho-2'-deoxyribonucleoside-DNA + H(+). In terms of biological role, involved in base excision repair of DNA damaged by oxidation or by mutagenic agents. Acts as a DNA glycosylase that recognizes and removes damaged bases. Has a preference for oxidized purines, such as 7,8-dihydro-8-oxoguanine (8-oxoG). Has AP (apurinic/apyrimidinic) lyase activity and introduces nicks in the DNA strand. Cleaves the DNA backbone by beta-delta elimination to generate a single-strand break at the site of the removed base with both 3'- and 5'-phosphates. The chain is Formamidopyrimidine-DNA glycosylase from Streptococcus agalactiae serotype Ia (strain ATCC 27591 / A909 / CDC SS700).